Here is a 98-residue protein sequence, read N- to C-terminus: Small ribosomal subunit protein bS16 (98 aa).

Belongs to the bacterial ribosomal protein bS16 family.

The sequence is that of Small ribosomal subunit protein bS16 from Pseudothermotoga lettingae (strain ATCC BAA-301 / DSM 14385 / NBRC 107922 / TMO) (Thermotoga lettingae).